The following is a 210-amino-acid chain: LexA repressor (210 aa).

Residues 31–51 (RAEISRELGFRSPNAAEEHLK) constitute a DNA-binding region (H-T-H motif). Residues S126 and K163 each act as for autocatalytic cleavage activity in the active site.

Belongs to the peptidase S24 family. As to quaternary structure, homodimer.

The catalysed reaction is Hydrolysis of Ala-|-Gly bond in repressor LexA.. Its function is as follows. Represses a number of genes involved in the response to DNA damage (SOS response), including recA and lexA. In the presence of single-stranded DNA, RecA interacts with LexA causing an autocatalytic cleavage which disrupts the DNA-binding part of LexA, leading to derepression of the SOS regulon and eventually DNA repair. This chain is LexA repressor, found in Actinobacillus succinogenes (strain ATCC 55618 / DSM 22257 / CCUG 43843 / 130Z).